The chain runs to 344 residues: uncharacterized protein (344 aa).

In terms of domain architecture, HTH araC/xylS-type spans 242–343; sequence RGITALVRSK…GVAPSEYSRR (102 aa). 2 DNA-binding regions (H-T-H motif) span residues 263 to 284 and 310 to 333; these read TDVA…AEEG and VQQV…KRWY.

This is an uncharacterized protein from Mycobacterium bovis (strain ATCC BAA-935 / AF2122/97).